A 225-amino-acid polypeptide reads, in one-letter code: UPF0758 protein XC_3944 (225 aa).

Residues 102 to 224 (ALSDPSSVGR…PVSLAERGWV (123 aa)) form the MPN domain. Positions 173, 175, and 186 each coordinate Zn(2+). The JAMM motif motif lies at 173 to 186 (HNHPSGNPEPSEAD).

It belongs to the UPF0758 family.

The sequence is that of UPF0758 protein XC_3944 from Xanthomonas campestris pv. campestris (strain 8004).